A 636-amino-acid polypeptide reads, in one-letter code: Biosynthetic arginine decarboxylase (636 aa).

The residue at position 101 (Lys101) is an N6-(pyridoxal phosphate)lysine. 286–296 lines the substrate pocket; that stretch reads FDVGGGLAVDY.

This sequence belongs to the Orn/Lys/Arg decarboxylase class-II family. SpeA subfamily. Mg(2+) serves as cofactor. It depends on pyridoxal 5'-phosphate as a cofactor.

It carries out the reaction L-arginine + H(+) = agmatine + CO2. The protein operates within amine and polyamine biosynthesis; agmatine biosynthesis; agmatine from L-arginine: step 1/1. Its function is as follows. Catalyzes the biosynthesis of agmatine from arginine. This chain is Biosynthetic arginine decarboxylase, found in Shewanella denitrificans (strain OS217 / ATCC BAA-1090 / DSM 15013).